The primary structure comprises 122 residues: Large ribosomal subunit protein uL14 (122 aa).

The protein belongs to the universal ribosomal protein uL14 family. As to quaternary structure, part of the 50S ribosomal subunit. Forms a cluster with proteins L3 and L19. In the 70S ribosome, L14 and L19 interact and together make contacts with the 16S rRNA in bridges B5 and B8.

Its function is as follows. Binds to 23S rRNA. Forms part of two intersubunit bridges in the 70S ribosome. The sequence is that of Large ribosomal subunit protein uL14 from Pseudomonas paraeruginosa (strain DSM 24068 / PA7) (Pseudomonas aeruginosa (strain PA7)).